Reading from the N-terminus, the 556-residue chain is 2-methylpropanoate--CoA ligase CCL4 (556 aa).

Residues 192–200 (TSGTTSSPK), 325–330 (HGYGLT), aspartate 423, 435–438 (IKDR), and lysine 531 each bind ATP. An SBD1 region spans residues 260–325 (DSEIIYDMIK…TESLGFAVSH (66 aa)). Residues 326 to 402 (GYGLTETAGL…LRGGSVMLGY (77 aa)) form an SBD2 region.

It belongs to the ATP-dependent AMP-binding enzyme family. In terms of tissue distribution, mostly expressed in old leaves and in cones and glandular trichomes (lupulin glands) after flowering, and, to a lower extent, in stems, young leaves and flowers.

It is found in the cytoplasm. Its subcellular location is the cytosol. The catalysed reaction is 2-methylpropanoate + ATP + CoA = 2-methylpropanoyl-CoA + AMP + diphosphate. The enzyme catalyses propanoate + ATP + CoA = propanoyl-CoA + AMP + diphosphate. It catalyses the reaction butanoate + ATP + CoA = butanoyl-CoA + AMP + diphosphate. It carries out the reaction 2-methylbutanoate + ATP + CoA = 2-methylbutanoyl-CoA + AMP + diphosphate. The protein operates within secondary metabolite biosynthesis. Functionally, involved in the biosynthesis of prenylated phenolics natural products which contribute to the bitter taste of beer and display broad biological activities. Catalyzes the ligation of CoA on 2-methylpropanoate (isobutyric acid) and 2-methylbutanoate to produce 2-methylpropanoyl-CoA and 2-methylbutanoyl-CoA, respectively. Can also use propanoate and butanoate as substrates with a lower efficiency. The polypeptide is 2-methylpropanoate--CoA ligase CCL4 (Humulus lupulus (European hop)).